Reading from the N-terminus, the 295-residue chain is MRHPDFPVPPRIDAFASWEASLRLAFARRGGRTVLASCRHRGPLRVQKALYPEGEGVCHVVLLHPPAGIAGGDVLDIGIELGAEAHAVLTTPGATKWYKSPGRTAMQQVAIRLDAGARLDWLPQENIVFNQARPVIDLTLDLAPGAAAIGWDITMLGRHAAGESWQEGRIAMHTRLRCEGQPLWIESTAFDAQSPVLGATTGMAGFHVVGTLWAVGAGATEALAETLAEQLPYRDDLRAGVTCLTQDAPGRPSVLLLRVLARRPEDARALLSQTWLALREPIHGVAGRPLRLWAT.

This sequence belongs to the UreD family. In terms of assembly, ureD, UreF and UreG form a complex that acts as a GTP-hydrolysis-dependent molecular chaperone, activating the urease apoprotein by helping to assemble the nickel containing metallocenter of UreC. The UreE protein probably delivers the nickel.

It is found in the cytoplasm. Its function is as follows. Required for maturation of urease via the functional incorporation of the urease nickel metallocenter. The chain is Urease accessory protein UreD from Ralstonia nicotianae (strain ATCC BAA-1114 / GMI1000) (Ralstonia solanacearum).